The chain runs to 376 residues: Succinyl-diaminopimelate desuccinylase (376 aa).

Histidine 64 serves as a coordination point for Zn(2+). Residue aspartate 66 is part of the active site. Aspartate 97 contacts Zn(2+). Residue glutamate 131 is the Proton acceptor of the active site. Zn(2+) is bound by residues glutamate 132, glutamate 160, and histidine 347.

It belongs to the peptidase M20A family. DapE subfamily. Homodimer. It depends on Zn(2+) as a cofactor. The cofactor is Co(2+).

The enzyme catalyses N-succinyl-(2S,6S)-2,6-diaminopimelate + H2O = (2S,6S)-2,6-diaminopimelate + succinate. Its pathway is amino-acid biosynthesis; L-lysine biosynthesis via DAP pathway; LL-2,6-diaminopimelate from (S)-tetrahydrodipicolinate (succinylase route): step 3/3. Its function is as follows. Catalyzes the hydrolysis of N-succinyl-L,L-diaminopimelic acid (SDAP), forming succinate and LL-2,6-diaminopimelate (DAP), an intermediate involved in the bacterial biosynthesis of lysine and meso-diaminopimelic acid, an essential component of bacterial cell walls. In Wigglesworthia glossinidia brevipalpis, this protein is Succinyl-diaminopimelate desuccinylase.